The sequence spans 352 residues: Protein Wnt-3a (352 aa).

The signal sequence occupies residues 1-18 (MAPLGYFLLLCSLKQALG). 11 cysteine pairs are disulfide-bonded: Cys-77/Cys-88, Cys-128/Cys-136, Cys-138/Cys-155, Cys-203/Cys-217, Cys-205/Cys-212, Cys-281/Cys-312, Cys-297/Cys-307, Cys-311/Cys-351, Cys-327/Cys-342, Cys-329/Cys-339, and Cys-334/Cys-335. Residue Asn-87 is glycosylated (N-linked (GlcNAc...) asparagine). Ser-209 carries O-palmitoleoyl serine; by PORCN lipidation. Asn-298 is a glycosylation site (N-linked (GlcNAc...) asparagine).

This sequence belongs to the Wnt family. As to quaternary structure, forms a soluble 1:1 complex with AFM; this prevents oligomerization and is required for prolonged biological activity. The complex with AFM may represent the physiological form in body fluids. Homooligomer; disulfide-linked, leading to inactivation. Interacts with PORCN. Interacts with APCDD1 and WLS. Component of the Wnt-Fzd-LRP5-LRP6 signaling complex that contains a WNT protein, a FZD protein and LRP5 or LRP6. Interacts directly in the complex with LRP6. Interacts with glypican GPC3. Interacts with PKD1 (via extracellular domain). Interacts with FZD5. Post-translationally, palmitoleoylation by PORCN is required for efficient binding to frizzled receptors. Palmitoleoylation is required for proper trafficking to cell surface, vacuolar acidification is critical to release palmitoleoylated WNT3A from WLS in secretory vesicles. Depalmitoleoylated by NOTUM, leading to inhibit Wnt signaling pathway, possibly by promoting disulfide bond formation and oligomerization. Proteolytic processing by TIKI1 and TIKI2 promotes oxidation and formation of large disulfide-bond oligomers, leading to inactivation of WNT3A. In terms of processing, disulfide bonds have critical and distinct roles in secretion and activity. Loss of each conserved cysteine in WNT3A results in high molecular weight oxidized Wnt oligomers, which are formed through inter-Wnt disulfide bonding. Moderately expressed in placenta and at low levels in adult lung, spleen, and prostate.

It is found in the secreted. Its subcellular location is the extracellular space. The protein localises to the extracellular matrix. Ligand for members of the frizzled family of seven transmembrane receptors. Functions in the canonical Wnt signaling pathway that results in activation of transcription factors of the TCF/LEF family. Required for normal embryonic mesoderm development and formation of caudal somites. Required for normal morphogenesis of the developing neural tube. Mediates self-renewal of the stem cells at the bottom on intestinal crypts (in vitro). The protein is Protein Wnt-3a (WNT3A) of Homo sapiens (Human).